A 270-amino-acid chain; its full sequence is 4-hydroxy-4-methyl-2-oxoglutarate aldolase tasA (270 aa).

The active-site Proton acceptor is His-49. Residues Glu-156 and Asp-182 each contribute to the a divalent metal cation site. Asp-182 contributes to the substrate binding site.

This sequence belongs to the HpcH/HpaI aldolase family. In terms of assembly, homohexamer; trimer of dimers. The cofactor is Co(2+). Mn(2+) serves as cofactor. Zn(2+) is required as a cofactor. Requires Fe(2+) as cofactor. It depends on Mg(2+) as a cofactor.

It catalyses the reaction 4-hydroxy-4-methyl-2-oxoglutarate = 2 pyruvate. Its pathway is secondary metabolite biosynthesis. Its function is as follows. 4-hydroxy-4-methyl-2-oxoglutarate aldolase; part of the gene cluster that mediates the biosynthesis of the tetramic acids Sch210971 and Sch210972, potential anti-HIV fungal natural product that contain a decalin core. The PKS module of tasS together with the enoylreductase tasC catalyze the formation of the polyketide unit which is then conjugated to 4-hydroxyl-4-methyl glutamate (HMG) by the condensation domain of the tasS NRPS module. One unique structural feature of Sch210971 and Sch210972 is the tetramic acid motif proposed to be derived from the non-proteinogenic amino acid HMG, by a Dieckmann-type condensation catalyzed by the reductase domain of tasS. The aldolase tasA catalyzes the aldol condensation of 2 molecules of pyruvic acid to yield the intermediate 4-hydroxyl-4-methyl-2-oxoglutarate (HMOG), which can then be stereoselectively transaminated, may be by tasG, to form HMG. The Diels-Alderase tas3 then uses the Dieckmann product of tasS as substrate and catalyzes the Diels-Alder cycloaddition to form the decalin ring of Sch210971 and Sch210972. The protein is 4-hydroxy-4-methyl-2-oxoglutarate aldolase tasA of Hapsidospora irregularis.